The primary structure comprises 263 residues: Inner membrane protein YpjD (263 aa).

Over 1–3 (MPV) the chain is Periplasmic. Residues 4–23 (FALLALVAYSVSLALIVPGL) form a helical membrane-spanning segment. Over 24 to 34 (LQKNGGWRRMA) the chain is Cytoplasmic. A helical membrane pass occupies residues 35-54 (IISAVIALVCHAIALEARIL). Topologically, residues 55–63 (PDGDSGQNL) are periplasmic. The chain crosses the membrane as a helical span at residues 64–83 (SLLNVGSLVSLMICTVMTIV). Topologically, residues 84–89 (ASRNRG) are cytoplasmic. The helical transmembrane segment at 90 to 109 (WLLLPIVYAFALINLALATF) threads the bilayer. The Periplasmic segment spans residues 110–123 (MPNEYITHLEATPG). The chain crosses the membrane as a helical span at residues 124-146 (MLVHIGLSLFSYATLIIAALYAL). At 147 to 181 (QLAWIDYQLKNKKLAFNQEMPPLMSIERKMFHITQ) the chain is on the cytoplasmic side. The helical transmembrane segment at 182–201 (IGVVLLTLTLCTGLFYMHNL) threads the bilayer. At 202–210 (FSMENIDKA) the chain is on the periplasmic side. Residues 211–228 (VLSIVAWFVYIVLLWGHY) form a helical membrane-spanning segment. Over 229 to 236 (HEGWRGRR) the chain is Cytoplasmic. Residues 237-259 (VVWFNVAGAVILTLAYFGSRIVQ) traverse the membrane as a helical segment. Over 260–263 (QLIS) the chain is Periplasmic.

The protein localises to the cell inner membrane. The chain is Inner membrane protein YpjD (ypjD) from Escherichia coli O157:H7.